The primary structure comprises 434 residues: Oxysterol-binding protein homolog 4 (434 aa).

The ALPS motif stretch occupies residues 7 to 29 (SSSWTSFLKSIASFNGDLSSLSA). The segment at 16-366 (SIASFNGDLS…WQRRWFKDFD (351 aa)) is OSBP-related domain (ORD). 24-29 (LSSLSA) contributes to the a 1,2-diacyl-sn-glycero-3-phospho-(1D-myo-inositol 4-phosphate) binding site. Gln96 lines the 20-hydroxycholesterol pocket. Position 96 (Gln96) interacts with 25-hydroxycholesterol. Positions 96 and 100 each coordinate 7beta-hydroxycholesterol. Gln96 serves as a coordination point for cholesterol. Gln96 contacts ergosterol. A 1,2-diacyl-sn-glycero-3-phospho-(1D-myo-inositol 4-phosphate) is bound by residues 109 to 112 (KPLN), 143 to 144 (HH), Lys336, Glu340, and Arg344. Thr370 bears the Phosphothreonine mark. Phosphoserine is present on Ser389.

It belongs to the OSBP family.

It localises to the cytoplasm. It is found in the golgi apparatus membrane. Lipid transport protein (LTP) involved in non-vesicular transfer of lipids between membranes. Functions in phosphoinositide-coupled directional transport of various lipids by carrying the lipid molecule in a hydrophobic pocket and transferring it between membranes through the cytosol. Involved in maintenance of intracellular sterol distribution and homeostasis. Involved in lipid countertransport between the Golgi complex and membranes of the endoplasmic reticulum. Specifically exchanges sterol with phosphatidylinositol 4-phosphate (PI4P), delivering sterol to the Golgi in exchange for PI4P, which is delivered to the ER-localized PI4P phosphatase SAC1 for degradation. Thus, by maintaining a PI4P gradient at the ER/Golgi interface, SAC1 may drive PS transport. Displays a similar affinity for PI4P and sterols. Binds sterol and PI4P in a mutually exclusive manner. Involved in ergosterol transport from the plasma membrane (PM) to the ER. Mediates sterol transport from the ER to mitochondria. Involved in the negative regulation of Golgi-derived transport vesicle biogenesis. Plays a role in the positive regulation of vesicular transport of ceramide from the ER to the Golgi, negatively regulating COPII-mediated ER export of cargos. The polypeptide is Oxysterol-binding protein homolog 4 (Saccharomyces cerevisiae (strain ATCC 204508 / S288c) (Baker's yeast)).